Consider the following 90-residue polypeptide: Small ribosomal subunit protein bS20 (90 aa).

A disordered region spans residues 1-28 (MPNTSSASKRLRQNEKRRLLNRATRSNM).

It belongs to the bacterial ribosomal protein bS20 family.

Binds directly to 16S ribosomal RNA. The chain is Small ribosomal subunit protein bS20 from Rhodopirellula baltica (strain DSM 10527 / NCIMB 13988 / SH1).